Consider the following 338-residue polypeptide: MSDRLKPLIGTAATRPLSREEAEFAFECLFEGEATPAQMGGLLMALRTRGETVDEYAAAASVMRAKCHKVRAPNGAIDIVGTGGDGKGTLNISTATAFVVAGAGVPVAKHGNRNLSSKSGAADALTEMGLNVMIGPEQVEACLMEAGIGFMMAPMHHPAMRHVGPVRAELGTRTIFNILGPLTNPAGVKRQLTGAFSPDLIRPMAEVLSALGSEKAWLVHGGDGTDELAISAASKVAALEGGQIREFELHPEEAGLPVHPFEEIVGGTPAENAQAFRALLDGAPGAYRDAVLLNAAAALVVADRAAHLREGVEIATDSILSGAAKAKVALLARLTNAA.

Residues Gly81, 84–85 (GD), Thr89, 91–94 (NIST), 109–117 (KHGNRNLSS), and Ala121 contribute to the 5-phospho-alpha-D-ribose 1-diphosphate site. Gly81 serves as a coordination point for anthranilate. Mg(2+) is bound at residue Ser93. Residue Asn112 participates in anthranilate binding. Arg167 is an anthranilate binding site. The Mg(2+) site is built by Asp226 and Glu227.

It belongs to the anthranilate phosphoribosyltransferase family. In terms of assembly, homodimer. Mg(2+) serves as cofactor.

It catalyses the reaction N-(5-phospho-beta-D-ribosyl)anthranilate + diphosphate = 5-phospho-alpha-D-ribose 1-diphosphate + anthranilate. It participates in amino-acid biosynthesis; L-tryptophan biosynthesis; L-tryptophan from chorismate: step 2/5. Functionally, catalyzes the transfer of the phosphoribosyl group of 5-phosphorylribose-1-pyrophosphate (PRPP) to anthranilate to yield N-(5'-phosphoribosyl)-anthranilate (PRA). The polypeptide is Anthranilate phosphoribosyltransferase (Cereibacter sphaeroides (strain ATCC 17029 / ATH 2.4.9) (Rhodobacter sphaeroides)).